The chain runs to 426 residues: Histidine--tRNA ligase (426 aa).

The protein belongs to the class-II aminoacyl-tRNA synthetase family. Homodimer.

The protein localises to the cytoplasm. It carries out the reaction tRNA(His) + L-histidine + ATP = L-histidyl-tRNA(His) + AMP + diphosphate + H(+). The sequence is that of Histidine--tRNA ligase from Prochlorococcus marinus (strain MIT 9312).